Here is a 145-residue protein sequence, read N- to C-terminus: Transcriptional regulator MraZ (145 aa).

2 consecutive SpoVT-AbrB domains span residues 5–49 and 78–121; these read TYNH…LESE and TYKV…AKEV.

The protein belongs to the MraZ family. As to quaternary structure, forms oligomers.

The protein resides in the cytoplasm. Its subcellular location is the nucleoid. This chain is Transcriptional regulator MraZ, found in Ureaplasma urealyticum serovar 10 (strain ATCC 33699 / Western).